A 499-amino-acid polypeptide reads, in one-letter code: Aspartyl/glutamyl-tRNA(Asn/Gln) amidotransferase subunit B (499 aa).

This sequence belongs to the GatB/GatE family. GatB subfamily. Heterotrimer of A, B and C subunits.

The enzyme catalyses L-glutamyl-tRNA(Gln) + L-glutamine + ATP + H2O = L-glutaminyl-tRNA(Gln) + L-glutamate + ADP + phosphate + H(+). It catalyses the reaction L-aspartyl-tRNA(Asn) + L-glutamine + ATP + H2O = L-asparaginyl-tRNA(Asn) + L-glutamate + ADP + phosphate + 2 H(+). Allows the formation of correctly charged Asn-tRNA(Asn) or Gln-tRNA(Gln) through the transamidation of misacylated Asp-tRNA(Asn) or Glu-tRNA(Gln) in organisms which lack either or both of asparaginyl-tRNA or glutaminyl-tRNA synthetases. The reaction takes place in the presence of glutamine and ATP through an activated phospho-Asp-tRNA(Asn) or phospho-Glu-tRNA(Gln). In Bifidobacterium longum (strain DJO10A), this protein is Aspartyl/glutamyl-tRNA(Asn/Gln) amidotransferase subunit B.